Here is a 1003-residue protein sequence, read N- to C-terminus: Glycine--tRNA ligase (1003 aa).

The glycine--tRNA ligase alpha subunit stretch occupies residues 1 to 310 (MSSQPLTLQD…VTAKQIPHIC (310 aa)). Positions 311–1003 (QDEDFLLEIG…CFGFYAWDAL (693 aa)) are glycine--tRNA ligase beta subunit.

This sequence belongs to the class-II aminoacyl-tRNA synthetase family.

The protein localises to the cytoplasm. It carries out the reaction tRNA(Gly) + glycine + ATP = glycyl-tRNA(Gly) + AMP + diphosphate. This is Glycine--tRNA ligase (glyQS) from Chlamydia muridarum (strain MoPn / Nigg).